The chain runs to 437 residues: GTPase Obg (437 aa).

Residues 2-160 form the Obg domain; the sequence is SMFLDTAKIS…RELQLELKIL (159 aa). The 178-residue stretch at 161 to 338 folds into the OBG-type G domain; that stretch reads ADVGLVGFPS…LMDATAELLA (178 aa). Residues 167 to 174, 192 to 196, 214 to 217, 284 to 287, and 319 to 321 contribute to the GTP site; these read GFPSVGKS, FTTIV, DLPG, NKMD, and SSL. Residues S174 and T194 each coordinate Mg(2+). One can recognise an OCT domain in the interval 359-437; the sequence is GFNEDERPFE…IGNFEFEFVD (79 aa).

This sequence belongs to the TRAFAC class OBG-HflX-like GTPase superfamily. OBG GTPase family. In terms of assembly, monomer. Mg(2+) serves as cofactor.

It localises to the cytoplasm. In terms of biological role, an essential GTPase which binds GTP, GDP and possibly (p)ppGpp with moderate affinity, with high nucleotide exchange rates and a fairly low GTP hydrolysis rate. Plays a role in control of the cell cycle, stress response, ribosome biogenesis and in those bacteria that undergo differentiation, in morphogenesis control. The chain is GTPase Obg from Streptococcus agalactiae serotype Ia (strain ATCC 27591 / A909 / CDC SS700).